Reading from the N-terminus, the 1101-residue chain is Rho GTPase-activating protein 30 (1101 aa).

In terms of domain architecture, Rho-GAP spans 20-215 (CDLQEHLQHS…FILTHVDQLF (196 aa)). Disordered regions lie at residues 224–243 (EVES…SPED), 300–400 (HETK…RAGG), and 451–529 (ALQH…AEDG). Positions 308 to 318 (RGAEDREDKSN) are enriched in basic and acidic residues. Residues 360-376 (LENDSIEAAEGEQEPEA) are compositionally biased toward acidic residues. Residues 459–472 (ASGPGPGPGLGPGP) are compositionally biased toward pro residues. Low complexity predominate over residues 508-520 (DSFSFLEDSSSSE). Serine 576 carries the phosphoserine modification. 2 disordered regions span residues 621-906 (GPKP…QPSP) and 965-991 (CPRP…SWRN). 4 stretches are compositionally biased toward basic and acidic residues: residues 658 to 694 (GEDK…DRGE), 701 to 735 (TKVR…KGVE), 759 to 770 (EEAQVEAGRDLE), and 779 to 822 (AEEK…DSRS). Residues 976 to 991 (GERAWGSRASRSSWRN) are compositionally biased toward low complexity. Serine 996 is subject to Phosphoserine. Residues 1050–1101 (LELPSEGAEGSGSRSRLSLPPREPQVPDPLLSSQRRSYAFETQANPGKGEGL) form a disordered region. The span at 1053–1069 (PSEGAEGSGSRSRLSLP) shows a compositional bias: low complexity. Residues 1080–1094 (LSSQRRSYAFETQAN) show a composition bias toward polar residues.

Interacts with RHOU in a GTP-independent manner.

It localises to the cytoplasmic vesicle. In terms of biological role, GTPase-activating protein (GAP) for RAC1 and RHOA, but not for CDC42. The polypeptide is Rho GTPase-activating protein 30 (ARHGAP30) (Homo sapiens (Human)).